A 67-amino-acid chain; its full sequence is Large ribosomal subunit protein uL29 (67 aa).

The protein belongs to the universal ribosomal protein uL29 family.

This is Large ribosomal subunit protein uL29 from Desulfitobacterium hafniense (strain DSM 10664 / DCB-2).